Consider the following 231-residue polypeptide: DNA mismatch repair protein MutH (231 aa).

This sequence belongs to the MutH family.

The protein resides in the cytoplasm. Sequence-specific endonuclease that cleaves unmethylated GATC sequences. It is involved in DNA mismatch repair. This is DNA mismatch repair protein MutH from Salmonella paratyphi C (strain RKS4594).